Consider the following 366-residue polypeptide: uncharacterized protein (366 aa).

This is an uncharacterized protein from Amazona oratrix (yellow-headed parrot).